A 527-amino-acid polypeptide reads, in one-letter code: RUS family member 1 (527 aa).

N-linked (GlcNAc...) asparagine glycosylation occurs at asparagine 21. Residues 220–240 (SQETAVNLVGMLLSVIVSSFI) form a helical membrane-spanning segment. The N-linked (GlcNAc...) asparagine glycan is linked to asparagine 243. Residues 245 to 265 (SLIVTWLVFLFFTSLHLFCNY) traverse the membrane as a helical segment. Residue asparagine 346 is glycosylated (N-linked (GlcNAc...) asparagine). A disordered region spans residues 350-426 (TKNVNNNNNN…NNNNNNNNNK (77 aa)). N-linked (GlcNAc...) asparagine glycans are attached at residues asparagine 467 and asparagine 497.

The protein belongs to the RUS1 family.

The protein resides in the membrane. This chain is RUS family member 1 (rusf1), found in Dictyostelium discoideum (Social amoeba).